The following is a 206-amino-acid chain: Protein-methionine-sulfoxide reductase heme-binding subunit MsrQ (206 aa).

6 consecutive transmembrane segments (helical) span residues 10 to 30 (VFIA…SAVL), 42 to 62 (LGLG…LQKL), 75 to 95 (LGLW…VFVL), 110 to 130 (PYII…VTSN), 147 to 167 (LVYV…RADL), and 169 to 189 (EWAI…PPVM).

This sequence belongs to the MsrQ family. As to quaternary structure, heterodimer of a catalytic subunit (MsrP) and a heme-binding subunit (MsrQ). FMN serves as cofactor. Requires heme b as cofactor.

It is found in the cell inner membrane. Its function is as follows. Part of the MsrPQ system that repairs oxidized periplasmic proteins containing methionine sulfoxide residues (Met-O), using respiratory chain electrons. Thus protects these proteins from oxidative-stress damage caused by reactive species of oxygen and chlorine generated by the host defense mechanisms. MsrPQ is essential for the maintenance of envelope integrity under bleach stress, rescuing a wide series of structurally unrelated periplasmic proteins from methionine oxidation. MsrQ provides electrons for reduction to the reductase catalytic subunit MsrP, using the quinone pool of the respiratory chain. The sequence is that of Protein-methionine-sulfoxide reductase heme-binding subunit MsrQ from Pseudomonas fluorescens (strain SBW25).